The following is a 467-amino-acid chain: 3-isopropylmalate dehydratase large subunit (467 aa).

[4Fe-4S] cluster is bound by residues Cys-347, Cys-407, and Cys-410.

Belongs to the aconitase/IPM isomerase family. LeuC type 1 subfamily. In terms of assembly, heterodimer of LeuC and LeuD. The cofactor is [4Fe-4S] cluster.

The enzyme catalyses (2R,3S)-3-isopropylmalate = (2S)-2-isopropylmalate. It functions in the pathway amino-acid biosynthesis; L-leucine biosynthesis; L-leucine from 3-methyl-2-oxobutanoate: step 2/4. In terms of biological role, catalyzes the isomerization between 2-isopropylmalate and 3-isopropylmalate, via the formation of 2-isopropylmaleate. The polypeptide is 3-isopropylmalate dehydratase large subunit (Synechococcus sp. (strain JA-3-3Ab) (Cyanobacteria bacterium Yellowstone A-Prime)).